A 724-amino-acid polypeptide reads, in one-letter code: Pesticidal crystal protein Cry11Ba (724 aa).

It belongs to the delta endotoxin family.

Functionally, promotes colloidosmotic lysis by binding to the midgut epithelial cells of mosquitos. Active on Aedes aegypti, Culex pipiens and Anopheles stephensi larvae. The chain is Pesticidal crystal protein Cry11Ba (cry11Ba) from Bacillus thuringiensis subsp. jegathesan.